Here is a 225-residue protein sequence, read N- to C-terminus: Ribonuclease 3 (225 aa).

Residues 5 to 127 (IDKLERKIGY…IIGAVYLDSD (123 aa)) enclose the RNase III domain. Residue Glu40 participates in Mg(2+) binding. The active site involves Asp44. The Mg(2+) site is built by Asp113 and Glu116. Glu116 is an active-site residue. One can recognise a DRBM domain in the interval 154–224 (DPKTRLQEFL…AETALEQLSN (71 aa)).

It belongs to the ribonuclease III family. In terms of assembly, homodimer. It depends on Mg(2+) as a cofactor.

Its subcellular location is the cytoplasm. The catalysed reaction is Endonucleolytic cleavage to 5'-phosphomonoester.. Its function is as follows. Digests double-stranded RNA. Involved in the processing of primary rRNA transcript to yield the immediate precursors to the large and small rRNAs (23S and 16S). Processes some mRNAs, and tRNAs when they are encoded in the rRNA operon. Processes pre-crRNA and tracrRNA of type II CRISPR loci if present in the organism. The polypeptide is Ribonuclease 3 (Vibrio atlanticus (strain LGP32) (Vibrio splendidus (strain Mel32))).